The primary structure comprises 20 residues: Trypsin inhibitor (20 aa).

The segment at 1–20 is disordered; it reads APSDTTIAETLTITEEFFPD.

Hemolymph.

It localises to the secreted. Its subcellular location is the extracellular space. Its function is as follows. Inhibits trypsin stoichiometrically. Also inhibits chymotrypsin very weakly. The chain is Trypsin inhibitor from Mythimna unipuncta (Armyworm moth).